The chain runs to 643 residues: Tigger transposable element-derived protein 5 (643 aa).

The interval 1–50 (MYSAGPPAVPAPRRCRRPPPGRPMQPPRPPAPAPVPAARPPPPAPGPRPR) is disordered. The segment covering 20-48 (PGRPMQPPRPPAPAPVPAARPPPPAPGPR) has biased composition (pro residues). The region spanning 52-103 (AVKMAFRKAYSIKDKLQAIERVKGGERQASVCRDFGVPGGTLRGWLKDEPKL) is the HTH psq-type domain. DNA-binding regions (H-T-H motif) lie at residues 79 to 99 (QASV…WLKD) and 150 to 183 (PLIQ…WQKR). The 74-residue stretch at 117–190 (QRKKMRLANE…QKRHGISSQR (74 aa)) folds into the HTH CENPB-type domain. A disordered region spans residues 197–236 (PVAAGPAPGPPVKQEPAQPTRAGPLPDRAASTPAPAEGGY). The DDE-1 domain occupies 238–358 (DEQIYNANVT…LQQKAVLLVA (121 aa)). Positions 366–395 (EARMPALEESEETRRRCRPEPTGPPEELQT) are disordered.

It belongs to the tigger transposable element derived protein family.

The protein resides in the nucleus. The polypeptide is Tigger transposable element-derived protein 5 (TIGD5) (Bos taurus (Bovine)).